The chain runs to 319 residues: ATP-dependent 6-phosphofructokinase (319 aa).

Residue glycine 11 participates in ATP binding. 21–25 (RAVVR) contributes to the ADP binding site. ATP contacts are provided by residues 72–73 (RS) and 102–105 (GDGS). Aspartate 103 serves as a coordination point for Mg(2+). Substrate is bound at residue 125 to 127 (TID). Residue aspartate 127 is the Proton acceptor of the active site. Arginine 154 contacts ADP. Residues arginine 162 and 169–171 (MGR) each bind substrate. Residues 185–187 (GAE), arginine 211, and 213–215 (KKH) contribute to the ADP site. Substrate contacts are provided by residues glutamate 222, arginine 243, and 249-252 (HIQR).

Belongs to the phosphofructokinase type A (PFKA) family. ATP-dependent PFK group I subfamily. Prokaryotic clade 'B1' sub-subfamily. As to quaternary structure, homotetramer. Requires Mg(2+) as cofactor.

The protein localises to the cytoplasm. The enzyme catalyses beta-D-fructose 6-phosphate + ATP = beta-D-fructose 1,6-bisphosphate + ADP + H(+). It participates in carbohydrate degradation; glycolysis; D-glyceraldehyde 3-phosphate and glycerone phosphate from D-glucose: step 3/4. With respect to regulation, allosterically activated by ADP and other diphosphonucleosides, and allosterically inhibited by phosphoenolpyruvate. In terms of biological role, catalyzes the phosphorylation of D-fructose 6-phosphate to fructose 1,6-bisphosphate by ATP, the first committing step of glycolysis. This Oceanobacillus iheyensis (strain DSM 14371 / CIP 107618 / JCM 11309 / KCTC 3954 / HTE831) protein is ATP-dependent 6-phosphofructokinase.